Consider the following 954-residue polypeptide: Valine--tRNA ligase (954 aa).

A 'HIGH' region motif is present at residues 48 to 58; that stretch reads PNVTGSLHMGH. Positions 560-564 match the 'KMSKS' region motif; sequence KMSKS. Lysine 563 is a binding site for ATP. Residues 886 to 954 are a coiled coil; the sequence is INKDTELARL…RAQYLSIENL (69 aa).

This sequence belongs to the class-I aminoacyl-tRNA synthetase family. ValS type 1 subfamily. Monomer.

The protein resides in the cytoplasm. The enzyme catalyses tRNA(Val) + L-valine + ATP = L-valyl-tRNA(Val) + AMP + diphosphate. Its function is as follows. Catalyzes the attachment of valine to tRNA(Val). As ValRS can inadvertently accommodate and process structurally similar amino acids such as threonine, to avoid such errors, it has a 'posttransfer' editing activity that hydrolyzes mischarged Thr-tRNA(Val) in a tRNA-dependent manner. This is Valine--tRNA ligase from Mannheimia succiniciproducens (strain KCTC 0769BP / MBEL55E).